The sequence spans 187 residues: Acireductone dioxygenase (187 aa).

Residues His-90, His-92, Glu-96, and His-135 each coordinate Fe(2+). Ni(2+) contacts are provided by His-90, His-92, Glu-96, and His-135.

It belongs to the acireductone dioxygenase (ARD) family. The cofactor is Fe(2+). Ni(2+) is required as a cofactor.

It localises to the cytoplasm. The protein localises to the nucleus. It catalyses the reaction 1,2-dihydroxy-5-(methylsulfanyl)pent-1-en-3-one + O2 = 4-methylsulfanyl-2-oxobutanoate + formate + 2 H(+). It carries out the reaction 1,2-dihydroxy-5-(methylsulfanyl)pent-1-en-3-one + O2 = 3-(methylsulfanyl)propanoate + CO + formate + 2 H(+). The protein operates within amino-acid biosynthesis; L-methionine biosynthesis via salvage pathway; L-methionine from S-methyl-5-thio-alpha-D-ribose 1-phosphate: step 5/6. In terms of biological role, catalyzes 2 different reactions between oxygen and the acireductone 1,2-dihydroxy-3-keto-5-methylthiopentene (DHK-MTPene) depending upon the metal bound in the active site. Fe-containing acireductone dioxygenase (Fe-ARD) produces formate and 2-keto-4-methylthiobutyrate (KMTB), the alpha-ketoacid precursor of methionine in the methionine recycle pathway. Ni-containing acireductone dioxygenase (Ni-ARD) produces methylthiopropionate, carbon monoxide and formate, and does not lie on the methionine recycle pathway. This is Acireductone dioxygenase from Drosophila pseudoobscura pseudoobscura (Fruit fly).